Here is a 296-residue protein sequence, read N- to C-terminus: Ribonuclease MRP protein subunit POP4 (296 aa).

Disordered stretches follow at residues 29–74 and 148–173; these read LLQQ…VDPK and SASG…KRLK. A compositionally biased stretch (basic and acidic residues) spans 36–56; the sequence is KNEKDKKGTSDVDVSMKESHQ. A compositionally biased stretch (polar residues) spans 57-66; it reads ADSLPTPSKT. Residues 160 to 167 carry the Nuclear localization signal motif; sequence SKRSKSRM. The span at 163-173 shows a compositional bias: basic residues; it reads SKSRMSMKRLK.

Belongs to the eukaryotic/archaeal RNase P protein component 1 family. Component of nuclear RNase MRP complexes. Several subunits of RNase P are also part of the RNase MRP complex. RNase MRP consists of a catalytic RNA moiety and several protein subunits.

Its subcellular location is the nucleus. Its function is as follows. Component of the MRP ribonuclease complex, which cleaves pre-rRNA sequences. Required for rRNA maturation, including 5.8S rRNA processing. Seems not involved in tRNA maturation. The sequence is that of Ribonuclease MRP protein subunit POP4 from Arabidopsis thaliana (Mouse-ear cress).